Here is a 95-residue protein sequence, read N- to C-terminus: uncharacterized protein (95 aa).

A signal peptide (or 21) is located at residues 1-24 (MKKLATLTALAGALTMAVATAAQA). A compositionally biased stretch (basic and acidic residues) spans 55-89 (EGKCGADKAKSAEGKCGEGKCGADKAKSAEGKCGE). The interval 55-95 (EGKCGADKAKSAEGKCGEGKCGADKAKSAEGKCGEGKCGSK) is disordered.

This is an uncharacterized protein from Haemophilus influenzae (strain ATCC 51907 / DSM 11121 / KW20 / Rd).